The sequence spans 365 residues: Phospho-N-acetylmuramoyl-pentapeptide-transferase (365 aa).

The next 10 membrane-spanning stretches (helical) occupy residues 22-42 (YVSV…LFLG), 74-94 (TMGG…WGSL), 95-115 (SSIY…IGFF), 134-154 (KFAL…YLLS), 169-189 (LHIP…INGS), 201-221 (GLAI…AYIQ), 240-260 (LAEV…FLWF), 268-288 (FMGD…AVMI), 292-312 (LIFF…MLQV), and 342-362 (KVVI…LVAI).

Belongs to the glycosyltransferase 4 family. MraY subfamily. Mg(2+) is required as a cofactor.

Its subcellular location is the cell inner membrane. It catalyses the reaction UDP-N-acetyl-alpha-D-muramoyl-L-alanyl-gamma-D-glutamyl-meso-2,6-diaminopimeloyl-D-alanyl-D-alanine + di-trans,octa-cis-undecaprenyl phosphate = di-trans,octa-cis-undecaprenyl diphospho-N-acetyl-alpha-D-muramoyl-L-alanyl-D-glutamyl-meso-2,6-diaminopimeloyl-D-alanyl-D-alanine + UMP. It functions in the pathway cell wall biogenesis; peptidoglycan biosynthesis. Its function is as follows. Catalyzes the initial step of the lipid cycle reactions in the biosynthesis of the cell wall peptidoglycan: transfers peptidoglycan precursor phospho-MurNAc-pentapeptide from UDP-MurNAc-pentapeptide onto the lipid carrier undecaprenyl phosphate, yielding undecaprenyl-pyrophosphoryl-MurNAc-pentapeptide, known as lipid I. The protein is Phospho-N-acetylmuramoyl-pentapeptide-transferase of Francisella philomiragia subsp. philomiragia (strain ATCC 25017 / CCUG 19701 / FSC 153 / O#319-036).